Consider the following 395-residue polypeptide: Tyrosine--tRNA ligase 2 (395 aa).

Positions 42–51 (PTAPDIHLGH) match the 'HIGH' region motif. Residues 226–230 (KMSKS) carry the 'KMSKS' region motif. Position 229 (K229) interacts with ATP. An S4 RNA-binding domain is found at 334-394 (IAISNLLKEA…GKRKFARVTI (61 aa)).

Belongs to the class-I aminoacyl-tRNA synthetase family. TyrS type 2 subfamily. As to quaternary structure, homodimer.

The protein localises to the cytoplasm. The enzyme catalyses tRNA(Tyr) + L-tyrosine + ATP = L-tyrosyl-tRNA(Tyr) + AMP + diphosphate + H(+). In terms of biological role, catalyzes the attachment of tyrosine to tRNA(Tyr) in a two-step reaction: tyrosine is first activated by ATP to form Tyr-AMP and then transferred to the acceptor end of tRNA(Tyr). The sequence is that of Tyrosine--tRNA ligase 2 from Vibrio cholerae serotype O1 (strain ATCC 39315 / El Tor Inaba N16961).